Reading from the N-terminus, the 415-residue chain is MPLEYMGGRLATLDDVDVRGKKVIVRFDLNSPVGNGGEILDDSRIAEAAGTLRELCDRGAAVVALSHQGRPLESDFVSLERHASLLSRYSGVEVRFVMDVIGPEALRTVASLRPGEAVLLDNTRIISEDFIEAEGTVHARGIMVTRLSKLANMYVNEAFSASHRSQASIVGFPYVLPSAGGRVLEKEIRSLNRAVSSGERPKVVVLGGAKLKDAVRIVDYLSSSGVADEVLTTGLVGLLFLYARGYRLPRDVTKLLEKKGGEEAIAKARRIVEEGRRVRTPIDFVVEVGDKIYIKPADELTEGVPKDIGPSTVEYFRAKMRGARVIVMRGPAGVIEDPRFRRGTVELVKAALSSGAYTVFGGGHFRAILRDLPEHLSSKVGHLSTGGGALLYYLSGRPLPGVKALVDSARIFNLV.

Substrate contacts are provided by residues 28–30, Arg44, 67–70, Arg124, and Arg164; these read DLN and HQGR. Residues Glu336 and 362 to 365 contribute to the ATP site; that span reads GGHF.

This sequence belongs to the phosphoglycerate kinase family.

The protein localises to the cytoplasm. It catalyses the reaction (2R)-3-phosphoglycerate + ATP = (2R)-3-phospho-glyceroyl phosphate + ADP. It participates in carbohydrate degradation; glycolysis; pyruvate from D-glyceraldehyde 3-phosphate: step 2/5. This is Phosphoglycerate kinase (pgk) from Aeropyrum pernix (strain ATCC 700893 / DSM 11879 / JCM 9820 / NBRC 100138 / K1).